The primary structure comprises 332 residues: MQAIFNKLFNAQTLTQQESQQLFAAIIQGELSEPQLAAVLISMKLRGEQPQEIAGAAQALLANALPFPRPDYTFCDIVGTGGDGANSINISTASAFVASACQIKIAKHGNRSVSSQSGSSDLLAAFGIALDISAECARSALDEIGICFLFAPHYHLGFCHAMPVRQQLKTRTIFNILGPLINPARPPLALIGVYSPELVEPIARTLLVLGYQRAAVVHSGGMDEVALHAPTKVAEINDGEIIHYQLNAEDFGLQRHPMSALKGGSPVDNHEMLSLLLQGRGKKAHADAVAANVALLMKIHGQEDLRHNTQQALETIHSGRAYERVIALATRS.

Residues Gly-79, 82 to 83 (GD), Ser-87, 89 to 92 (NIST), 107 to 115 (KHGNRSVSS), and Ser-119 each bind 5-phospho-alpha-D-ribose 1-diphosphate. Gly-79 provides a ligand contact to anthranilate. Ser-91 contacts Mg(2+). Asn-110 serves as a coordination point for anthranilate. Arg-165 contacts anthranilate. Residues Asp-223 and Glu-224 each coordinate Mg(2+).

This sequence belongs to the anthranilate phosphoribosyltransferase family. As to quaternary structure, homodimer. The cofactor is Mg(2+).

The enzyme catalyses N-(5-phospho-beta-D-ribosyl)anthranilate + diphosphate = 5-phospho-alpha-D-ribose 1-diphosphate + anthranilate. Its pathway is amino-acid biosynthesis; L-tryptophan biosynthesis; L-tryptophan from chorismate: step 2/5. Catalyzes the transfer of the phosphoribosyl group of 5-phosphorylribose-1-pyrophosphate (PRPP) to anthranilate to yield N-(5'-phosphoribosyl)-anthranilate (PRA). The protein is Anthranilate phosphoribosyltransferase of Photorhabdus laumondii subsp. laumondii (strain DSM 15139 / CIP 105565 / TT01) (Photorhabdus luminescens subsp. laumondii).